The primary structure comprises 310 residues: Manganese ABC transporter substrate-binding lipoprotein scaA (310 aa).

The first 19 residues, 1 to 19, serve as a signal peptide directing secretion; the sequence is MKKCRFLVLLLLAFVGLAA. A lipid anchor (N-palmitoyl cysteine) is attached at Cys-20. The S-diacylglycerol cysteine moiety is linked to residue Cys-20. Residues His-68, His-140, Glu-206, and Asp-281 each contribute to the Mn(2+) site.

It belongs to the bacterial solute-binding protein 9 family. Lipoprotein receptor antigen (Lrai) subfamily. The complex is composed of two ATP-binding proteins (ScaC), two transmembrane proteins (ScaB) and a solute-binding protein (ScaA).

Its subcellular location is the cell membrane. In terms of biological role, part of ATP-binding cassette (ABC) transport system ScaABC involved in manganese import. Essential for growth under Mn(2+)-limiting conditions. Also acts as an adhesin which is involved on adherence to extracellular matrix. It is an important factor in pathogenesis and infection. In Streptococcus gordonii, this protein is Manganese ABC transporter substrate-binding lipoprotein scaA.